Consider the following 541-residue polypeptide: Probable inorganic phosphate transporter 1-8 (541 aa).

The Cytoplasmic portion of the chain corresponds to 1–28 (MARQEQQQHLQVLSALDAAKTQWYHFTA). The helical transmembrane segment at 29–49 (IVVAGMGFFTDAYDLFCISLV) threads the bilayer. At 50 to 74 (TKLLGRIYYTDLAKENPGSLPPNVA) the chain is on the extracellular side. Residues 75–95 (AAVNGVAFCGTLAGQLFFGWL) traverse the membrane as a helical segment. Residues 96 to 102 (GDKLGRK) are Cytoplasmic-facing. Residues 103-123 (SVYGMTLLMMVICSIASGLSF) form a helical membrane-spanning segment. The Extracellular portion of the chain corresponds to 124–126 (SHT). A helical membrane pass occupies residues 127–147 (PTSVMATLCFFRFWLGFGIGG). Over 148 to 168 (DYPLSATIMSEYANKKTRGAF) the chain is Cytoplasmic. The helical transmembrane segment at 169-189 (IAAVFAMQGFGILAGGIVTLI) threads the bilayer. Over 190–215 (ISSAFRAGFPAPAYQDDRAGSTVRQA) the chain is Extracellular. Residues 216 to 236 (DYVWRIILMLGAMPALLTYYW) traverse the membrane as a helical segment. Residues 237 to 297 (RMKMPETARY…GLFSRQFARR (61 aa)) are Cytoplasmic-facing. The chain crosses the membrane as a helical span at residues 298–318 (HGLHLVGTATTWFLLDIAFYS). Residues 319–353 (QNLFQKDIFTSINWIPKAKTMSALEEVFRIARAQT) lie on the Extracellular side of the membrane. The helical transmembrane segment at 354–374 (LIALCGTVPGYWFTVFLIDIV) threads the bilayer. The Cytoplasmic portion of the chain corresponds to 375 to 376 (GR). The helical transmembrane segment at 377–397 (FAIQLLGFFMMTVFMLGLAVP) threads the bilayer. Residues 398–404 (YHHWTTK) lie on the Extracellular side of the membrane. Residues 405–425 (GNHIGFVVMYAFTFFFANFGP) form a helical membrane-spanning segment. The Cytoplasmic portion of the chain corresponds to 426–447 (NSTTFIVPAEIFPARLRSTCHG). Residues 448 to 468 (ISAAAGKAGAIIGSFGFLYAA) form a helical membrane-spanning segment. Residues 469–486 (QDPHKPDAGYKPGIGVRN) lie on the Extracellular side of the membrane. A helical membrane pass occupies residues 487–507 (SLFVLAGCNLLGFICTFLVPE). Residues 508-541 (SKGKSLEEMSGEAEDDDDEVAAAGGGAAVRPQTA) lie on the Cytoplasmic side of the membrane. Positions 514-541 (EEMSGEAEDDDDEVAAAGGGAAVRPQTA) are disordered. Positions 516–527 (MSGEAEDDDDEV) are enriched in acidic residues.

Belongs to the major facilitator superfamily. Phosphate:H(+) symporter (TC 2.A.1.9) family.

The protein localises to the membrane. High-affinity transporter for external inorganic phosphate. This Oryza sativa subsp. japonica (Rice) protein is Probable inorganic phosphate transporter 1-8 (PHT1-8).